The chain runs to 204 residues: Large ribosomal subunit protein bL9 (204 aa).

The tract at residues 180 to 204 (DDIGGAASDDEGDAPAAAADEEESK) is disordered. The span at 187–204 (SDDEGDAPAAAADEEESK) shows a compositional bias: acidic residues.

It belongs to the bacterial ribosomal protein bL9 family.

Binds to the 23S rRNA. This is Large ribosomal subunit protein bL9 from Ruegeria sp. (strain TM1040) (Silicibacter sp.).